The following is a 63-amino-acid chain: Large ribosomal subunit protein uL29 (63 aa).

The protein belongs to the universal ribosomal protein uL29 family.

The polypeptide is Large ribosomal subunit protein uL29 (Pseudoalteromonas atlantica (strain T6c / ATCC BAA-1087)).